The sequence spans 375 residues: Queuine tRNA-ribosyltransferase (375 aa).

The Proton acceptor role is filled by Asp-89. Residues 89–93 (DSGGF), Asp-143, Gln-187, and Gly-214 each bind substrate. Residues 245–251 (GVGKPED) are RNA binding. Asp-264 (nucleophile) is an active-site residue. Positions 269–273 (TRNAR) are RNA binding; important for wobble base 34 recognition. Positions 302, 304, 307, and 333 each coordinate Zn(2+).

This sequence belongs to the queuine tRNA-ribosyltransferase family. Homodimer. Within each dimer, one monomer is responsible for RNA recognition and catalysis, while the other monomer binds to the replacement base PreQ1. Zn(2+) is required as a cofactor.

It catalyses the reaction 7-aminomethyl-7-carbaguanine + guanosine(34) in tRNA = 7-aminomethyl-7-carbaguanosine(34) in tRNA + guanine. Its pathway is tRNA modification; tRNA-queuosine biosynthesis. Functionally, catalyzes the base-exchange of a guanine (G) residue with the queuine precursor 7-aminomethyl-7-deazaguanine (PreQ1) at position 34 (anticodon wobble position) in tRNAs with GU(N) anticodons (tRNA-Asp, -Asn, -His and -Tyr). Catalysis occurs through a double-displacement mechanism. The nucleophile active site attacks the C1' of nucleotide 34 to detach the guanine base from the RNA, forming a covalent enzyme-RNA intermediate. The proton acceptor active site deprotonates the incoming PreQ1, allowing a nucleophilic attack on the C1' of the ribose to form the product. After dissociation, two additional enzymatic reactions on the tRNA convert PreQ1 to queuine (Q), resulting in the hypermodified nucleoside queuosine (7-(((4,5-cis-dihydroxy-2-cyclopenten-1-yl)amino)methyl)-7-deazaguanosine). In Salmonella agona (strain SL483), this protein is Queuine tRNA-ribosyltransferase.